The sequence spans 1156 residues: Mastermind-like protein 2 (1156 aa).

The interval 81–165 is disordered; it reads QHGQGARKAG…PPASTPGDQR (85 aa). The segment covering 113–122 has biased composition (low complexity); sequence PAASQAAATA. A compositionally biased stretch (polar residues) spans 153-165; sequence EQQPPASTPGDQR. Position 175 is a phosphoserine (Ser-175). 7 disordered regions span residues 340–359, 369–506, 531–630, 658–680, 705–743, 784–820, and 1059–1100; these read FNID…SLPM, SPGL…GSGQ, QQKP…QQQQ, QQQQ…QPLL, YQVS…GYMN, IAPQ…YSGG, and LPNL…FQGT. 4 stretches are compositionally biased toward polar residues: residues 344–354, 371–380, 393–419, and 428–437; these read LGQQSQRSTPR, GLTQGPSGSP, MANS…TGSG, and QEVSHAQQLK. Positions 440–470 are enriched in low complexity; the sequence is AANRQQHARMQQHQQQHQPTNWSALPSSAGP. 3 stretches are compositionally biased toward polar residues: residues 484-496, 532-543, and 563-587; these read SFGQ…QSSP, QKPQDLSRSFIN, and NSDQ…LHYT. The span at 588–630 shows a compositional bias: low complexity; the sequence is QQQQQQQQQQQQQQQQQQQQQQQQQQQQQQQQQQSSISAQQQQ. Low complexity-rich tracts occupy residues 706-725 and 733-743; these read QVSQ…NTGP and SNPNTGSGYMN. Positions 807 to 820 are enriched in polar residues; sequence NVGNMQPTAQYSGG.

Belongs to the mastermind family. As to quaternary structure, interacts through its N-terminal region with the ankyrin repeat region of the Notch proteins NOTCH1, NOTCH2, NOTCH3 and NOTCH4. Forms a DNA-binding complex with Notch proteins and RBPSUH/RBP-J kappa. Widely expressed with high levels detected in placenta, salivary gland and skeletal muscle.

It localises to the nucleus speckle. Functionally, acts as a transcriptional coactivator for NOTCH proteins. Has been shown to amplify NOTCH-induced transcription of HES1. Potentiates activation by NOTCH3 and NOTCH4 more efficiently than MAML1 or MAML3. The protein is Mastermind-like protein 2 (MAML2) of Homo sapiens (Human).